A 92-amino-acid polypeptide reads, in one-letter code: C-C motif chemokine 22 (92 aa).

The first 24 residues, 1 to 24 (MATLRVPLLVALVLLAVAIQTSDA), serve as a signal peptide directing secretion. 2 cysteine pairs are disulfide-bonded: cysteine 36-cysteine 60 and cysteine 37-cysteine 76.

Belongs to the intercrine beta (chemokine CC) family. Expressed by activated splenic B-lymphocytes and dendritic cells. Low expression in lung, thymocytes, lymph node, and unstimulated splenic cells.

Its subcellular location is the secreted. Functionally, chemotactic for activated T-lymphocytes. May play an important role in the collaboration of dendritic cells and B-lymphocytes with T-cells in immune responses. The chain is C-C motif chemokine 22 (Ccl22) from Mus musculus (Mouse).